The primary structure comprises 167 residues: Ribosome maturation factor RimM (167 aa).

The region spanning 92 to 166 is the PRC barrel domain; sequence DDEFYHADLI…RIVADPPEEQ (75 aa).

It belongs to the RimM family. Binds ribosomal protein uS19.

Its subcellular location is the cytoplasm. Functionally, an accessory protein needed during the final step in the assembly of 30S ribosomal subunit, possibly for assembly of the head region. Essential for efficient processing of 16S rRNA. May be needed both before and after RbfA during the maturation of 16S rRNA. It has affinity for free ribosomal 30S subunits but not for 70S ribosomes. The chain is Ribosome maturation factor RimM from Paracoccus denitrificans (strain Pd 1222).